Consider the following 438-residue polypeptide: Exodeoxyribonuclease 7 large subunit (438 aa).

The interval 405–438 is disordered; it reads GATSTGPTDDIPSSAARLPSSPAPDARPASGAES.

The protein belongs to the XseA family. As to quaternary structure, heterooligomer composed of large and small subunits.

The protein resides in the cytoplasm. It carries out the reaction Exonucleolytic cleavage in either 5'- to 3'- or 3'- to 5'-direction to yield nucleoside 5'-phosphates.. In terms of biological role, bidirectionally degrades single-stranded DNA into large acid-insoluble oligonucleotides, which are then degraded further into small acid-soluble oligonucleotides. This Clavibacter michiganensis subsp. michiganensis (strain NCPPB 382) protein is Exodeoxyribonuclease 7 large subunit.